The chain runs to 486 residues: Transcription factor VOZ1 (486 aa).

Residues 208 to 405 form a VOZ region; the sequence is PPSAFLGPKC…VDGKKTSKGK (198 aa). Zn(2+) contacts are provided by Cys-217, Cys-222, Cys-236, and His-240. The C3H1-type; atypical zinc finger occupies 217–240; the sequence is CALWDCPRPAQGFDWFQDYCSSFH. Residues 424-445 form a disordered region; it reads EFPPENNTTNTTNNNKRCIKGR. Residues 429–438 are compositionally biased toward low complexity; sequence NNTTNTTNNN.

In terms of assembly, homodimer. Interacts with phytochrome B (phyB). In terms of tissue distribution, ubiquitous. Expressed in the vascular bundles of various tissues, specifically in the phloem.

It is found in the cytoplasm. The protein localises to the nucleus. Its function is as follows. Transcriptional activator acting positively in the phytochrome B signaling pathway. Functions redundantly with VOZ2 to promote flowering downstream of phytochrome B (phyB). Down-regulates 'FLOWERING LOCUS C' (FLC) and up-regulates 'FLOWERING LOCUS T' (FT). Binds to the 38-bp cis-acting region of the AVP1 gene. Interacts with phyB in the cytoplasm and is translocated to the nucleus at signal transmission, where it is subjected to degradation in a phytochrome-dependent manner. This chain is Transcription factor VOZ1 (VOZ1), found in Arabidopsis thaliana (Mouse-ear cress).